The sequence spans 372 residues: Tribbles homolog 1 (372 aa).

Disordered regions lie at residues Met-1–Ala-26 and Arg-49–Ser-85. Residues Tyr-59–Ser-74 show a composition bias toward pro residues. The Protein kinase domain occupies Ile-91–Phe-338. A COP1-binding motif is present at residues Asp-355–Glu-360.

Belongs to the protein kinase superfamily. CAMK Ser/Thr protein kinase family. Tribbles subfamily. Monomer. Interacts (via protein kinase domain) with CEBPA. Interacts with COP1.

Adapter protein involved in protein degradation by interacting with COP1 ubiquitin ligase. Promotes CEBPA degradation and inhibits its function. Controls macrophage, eosinophil and neutrophil differentiation via the COP1-binding domain. Regulates myeloid cell differentiation by altering the expression of CEBPA in a COP1-dependent manner. Interacts with MAPK kinases and regulates activation of MAP kinases, but has no kinase activity. The protein is Tribbles homolog 1 of Mus musculus (Mouse).